We begin with the raw amino-acid sequence, 173 residues long: Sialic acid TRAP transporter small permease protein SiaQ (173 aa).

Transmembrane regions (helical) follow at residues 13-33 (IEEI…TWQI), 46-66 (SEEL…AIAI), 87-107 (LSLV…IIVL), and 123-143 (LGIS…FMVF).

It belongs to the TRAP transporter small permease family. The complex comprises the extracytoplasmic solute receptor protein SiaP, and the two transmembrane proteins SiaQ and SiaM. SiaQ and SiaM form a tight 1:1 complex.

Its subcellular location is the cell inner membrane. Functionally, part of the tripartite ATP-independent periplasmic (TRAP) transport system SiaPQM that catalyzes unidirectional Na(+)-dependent sialic acid uptake. The protein is Sialic acid TRAP transporter small permease protein SiaQ of Vibrio cholerae serotype O1 (strain ATCC 39315 / El Tor Inaba N16961).